A 262-amino-acid polypeptide reads, in one-letter code: MAVGKNKGLSKGGKKGVKKKVVDPFTRKDWYDVKAPSMFTTRQIGKTLVNRTQGTKIASEGLKGRVFEVSLADLQNDTDAERSYRKFRLIAEDVQARNVLTNFHGMDLTTDKLRSMVKKWQTLIEANVDVRTTDGYLLRVFCIGFTNKDQLSQRKTCYAQHTQVRQIRRKMVDNITSSISNSDLRVVVNKLIPDSIAKDIEKACQGIYPLHDVYIRKVKVLKKPRFELSKLLELHGDGKGSDEPGAKVSRPEAYEPPVQESV.

Residues 235 to 253 (HGDGKGSDEPGAKVSRPEA) are compositionally biased toward basic and acidic residues. The segment at 235–262 (HGDGKGSDEPGAKVSRPEAYEPPVQESV) is disordered.

It belongs to the eukaryotic ribosomal protein eS1 family. Component of the small ribosomal subunit. Mature ribosomes consist of a small (40S) and a large (60S) subunit. The 40S subunit contains about 33 different proteins and 1 molecule of RNA (18S). The 60S subunit contains about 49 different proteins and 3 molecules of RNA (28S, 5.8S and 5S).

It is found in the cytoplasm. The protein is Small ribosomal subunit protein eS1 of Triatoma infestans (Assassin bug).